Reading from the N-terminus, the 153-residue chain is Conglutin delta 2 (153 aa).

Residues 1 to 22 form the signal peptide; it reads MAKLTILIALVAALVLVVHTSA. 4 cysteine pairs are disulfide-bonded: Cys30/Cys102, Cys42/Cys90, Cys91/Cys138, and Cys104/Cys146.

It belongs to the 2S seed storage albumins family. In terms of assembly, heterodimer of a small chain and a large chain; disulfide-linked. Expressed in developing cotyledons (at protein level).

The protein resides in the endoplasmic reticulum. This chain is Conglutin delta 2, found in Lupinus angustifolius (Narrow-leaved blue lupine).